Reading from the N-terminus, the 92-residue chain is Large ribosomal subunit protein eL43 (92 aa).

A C4-type zinc finger spans residues Cys39–Cys60.

Belongs to the eukaryotic ribosomal protein eL43 family.

In Ostreococcus lucimarinus (strain CCE9901), this protein is Large ribosomal subunit protein eL43 (RPL37a).